The following is a 308-amino-acid chain: D-2-hydroxyacid dehydrogenase (308 aa).

NAD(+) contacts are provided by residues 145–146 (TL), 224–226 (VAR), and aspartate 250. The active site involves arginine 226. Residue glutamate 255 is part of the active site. Histidine 274 functions as the Proton donor in the catalytic mechanism. Residue 274–277 (HVSA) participates in NAD(+) binding.

The protein belongs to the D-isomer specific 2-hydroxyacid dehydrogenase family. In terms of assembly, homotetramer.

Catalyzes the stereospecific NAD(P)H-dependent reduction of 2-ketocarboxylic acids into the corresponding D-2-hydroxycarboxylic acids. Can use both NADPH or NADH as reductant, displaying a marked preference for NADPH over NADH. Shows a broad substrate specificity, although it displays a marked preference for the 2-ketocarboxylic acids having an unbranched chain of 4-5 carbon atoms. This Haloferax mediterranei (strain ATCC 33500 / DSM 1411 / JCM 8866 / NBRC 14739 / NCIMB 2177 / R-4) (Halobacterium mediterranei) protein is D-2-hydroxyacid dehydrogenase (ddh).